The following is a 140-amino-acid chain: MSKMRVEVVSTEQLIFSGEAEFVVAPATEGEIGVYPQHVPLLTRIKPGVLRLKVPGTKEEVLVAVSGGMMEVQPSLITVLADTAIRGEDLDEARANEAKRAAEDALKHATDDMSTAKAHAALAVAIAELKTLDYLKKRAH.

Belongs to the ATPase epsilon chain family. F-type ATPases have 2 components, CF(1) - the catalytic core - and CF(0) - the membrane proton channel. CF(1) has five subunits: alpha(3), beta(3), gamma(1), delta(1), epsilon(1). CF(0) has three main subunits: a, b and c.

It localises to the cell inner membrane. Produces ATP from ADP in the presence of a proton gradient across the membrane. The protein is ATP synthase epsilon chain of Chromobacterium violaceum (strain ATCC 12472 / DSM 30191 / JCM 1249 / CCUG 213 / NBRC 12614 / NCIMB 9131 / NCTC 9757 / MK).